Here is a 379-residue protein sequence, read N- to C-terminus: UDP-N-acetylglucosamine--N-acetylmuramyl-(pentapeptide) pyrophosphoryl-undecaprenol N-acetylglucosamine transferase (379 aa).

UDP-N-acetyl-alpha-D-glucosamine contacts are provided by residues 19-21 (TGG), Asn133, Arg174, Ser207, Ile261, and Gln306.

It belongs to the glycosyltransferase 28 family. MurG subfamily.

It localises to the cell inner membrane. It catalyses the reaction di-trans,octa-cis-undecaprenyl diphospho-N-acetyl-alpha-D-muramoyl-L-alanyl-D-glutamyl-meso-2,6-diaminopimeloyl-D-alanyl-D-alanine + UDP-N-acetyl-alpha-D-glucosamine = di-trans,octa-cis-undecaprenyl diphospho-[N-acetyl-alpha-D-glucosaminyl-(1-&gt;4)]-N-acetyl-alpha-D-muramoyl-L-alanyl-D-glutamyl-meso-2,6-diaminopimeloyl-D-alanyl-D-alanine + UDP + H(+). It functions in the pathway cell wall biogenesis; peptidoglycan biosynthesis. Cell wall formation. Catalyzes the transfer of a GlcNAc subunit on undecaprenyl-pyrophosphoryl-MurNAc-pentapeptide (lipid intermediate I) to form undecaprenyl-pyrophosphoryl-MurNAc-(pentapeptide)GlcNAc (lipid intermediate II). In Porphyromonas gingivalis (strain ATCC 33277 / DSM 20709 / CIP 103683 / JCM 12257 / NCTC 11834 / 2561), this protein is UDP-N-acetylglucosamine--N-acetylmuramyl-(pentapeptide) pyrophosphoryl-undecaprenol N-acetylglucosamine transferase.